Consider the following 947-residue polypeptide: DNA polymerase (947 aa).

This sequence belongs to the DNA polymerase type-B family.

The catalysed reaction is DNA(n) + a 2'-deoxyribonucleoside 5'-triphosphate = DNA(n+1) + diphosphate. This Red sea bream iridovirus (RSIV) protein is DNA polymerase.